The primary structure comprises 569 residues: Urease subunit beta (569 aa).

The 439-residue stretch at 131–569 (GGIDTHIHFI…VSLAQLFSIF (439 aa)) folds into the Urease domain. Positions 136, 138, and 219 each coordinate Ni(2+). Position 219 is an N6-carboxylysine (lysine 219). Histidine 221 contributes to the substrate binding site. Ni(2+) contacts are provided by histidine 248 and histidine 274. Histidine 322 acts as the Proton donor in catalysis. A Ni(2+)-binding site is contributed by aspartate 362.

This sequence belongs to the metallo-dependent hydrolases superfamily. Urease alpha subunit family. Heterohexamer of 3 UreA (alpha) and 3 UreB (beta) subunits. Four heterohexamers assemble to form a 16 nm dodecameric complex. Ni cation serves as cofactor. Post-translationally, carboxylation allows a single lysine to coordinate two nickel ions.

The protein resides in the cytoplasm. The catalysed reaction is urea + 2 H2O + H(+) = hydrogencarbonate + 2 NH4(+). The protein operates within nitrogen metabolism; urea degradation; CO(2) and NH(3) from urea (urease route): step 1/1. In terms of biological role, ammonia produced by ureolysis increases the gastric pH thereby providing an environment permissive for colonization of the stomach. The polypeptide is Urease subunit beta (Helicobacter pylori (strain J99 / ATCC 700824) (Campylobacter pylori J99)).